The primary structure comprises 464 residues: Hydrogen cyanide synthase subunit HcnB (464 aa).

As to quaternary structure, heterotrimer of HcnA, HcnB and HcnC.

The protein localises to the cell membrane. The catalysed reaction is glycine + 2 A = hydrogen cyanide + 2 AH2 + CO2. Oxygen is necessary for cyanogenesis. Activated by succinate, glycine methyl ester, glucose and D,L-methionine in addition to glycine. Phenazine methosulfate, methylene blue, 2,6-dichlorophenolindophenol (DCIP) and ferricyanide can replace oxygen for the reaction. Inhibited by pyrrolnitrin and acriflavine at 1 mM concentration. A three-component membrane-bound flavoenzyme that catalyzes the formation of hydrogen cyanide, a secondary metabolite, by transfer of electrons to a cyanide-resistant branch of the aerobic respiratory chain. This is Hydrogen cyanide synthase subunit HcnB from Pseudomonas aeruginosa (strain ATCC 15692 / DSM 22644 / CIP 104116 / JCM 14847 / LMG 12228 / 1C / PRS 101 / PAO1).